The following is a 475-amino-acid chain: Tetratricopeptide repeat protein 29 (475 aa).

7 TPR repeats span residues 92–131 (DALR…EDAE), 136–173 (FEDV…AQLI), 182–215 (AEAH…TQGR), 234–267 (LRTY…AKEG), 274–307 (GEAS…STEL), 314–347 (GRAY…ARNN), and 354–387 (VRAS…TVEL). Positions 436–475 (DIEPDPVTEEFRGSTVETVSQNSEHLEELSRFPGDQKNET) are disordered. Basic and acidic residues predominate over residues 459–475 (EHLEELSRFPGDQKNET).

Its subcellular location is the cytoplasm. It is found in the cytoskeleton. It localises to the flagellum axoneme. Its function is as follows. Axonemal protein which is implicated in axonemal and/or peri-axonemal structure assembly and regulates flagellum assembly and beating and therefore sperm motility. The protein is Tetratricopeptide repeat protein 29 (TTC29) of Macaca fascicularis (Crab-eating macaque).